The following is a 37-amino-acid chain: Large ribosomal subunit protein bL36 (37 aa).

This sequence belongs to the bacterial ribosomal protein bL36 family.

This chain is Large ribosomal subunit protein bL36, found in Bacillus anthracis (strain A0248).